We begin with the raw amino-acid sequence, 498 residues long: Glycerol kinase (498 aa).

Threonine 12 provides a ligand contact to ADP. Residues threonine 12, threonine 13, and serine 14 each contribute to the ATP site. A sn-glycerol 3-phosphate-binding site is contributed by threonine 12. Arginine 16 contributes to the ADP binding site. Positions 82, 83, 134, and 243 each coordinate sn-glycerol 3-phosphate. 5 residues coordinate glycerol: arginine 82, glutamate 83, tyrosine 134, aspartate 243, and glutamine 244. Threonine 265 and glycine 308 together coordinate ADP. Residues threonine 265, glycine 308, glutamine 312, and glycine 411 each contribute to the ATP site. Glycine 411 contacts ADP.

It belongs to the FGGY kinase family.

The enzyme catalyses glycerol + ATP = sn-glycerol 3-phosphate + ADP + H(+). Its pathway is polyol metabolism; glycerol degradation via glycerol kinase pathway; sn-glycerol 3-phosphate from glycerol: step 1/1. With respect to regulation, inhibited by fructose 1,6-bisphosphate (FBP). Functionally, key enzyme in the regulation of glycerol uptake and metabolism. Catalyzes the phosphorylation of glycerol to yield sn-glycerol 3-phosphate. The polypeptide is Glycerol kinase (Brucella suis biovar 1 (strain 1330)).